Here is a 315-residue protein sequence, read N- to C-terminus: Neuroguidin (315 aa).

N-acetylalanine is present on Ala-2. The stretch at 13 to 41 forms a coiled coil; that stretch reads SAVTLLKNLQEQVMAVTAQVKSLTQKVQA. The necessary for interaction with EIF4E stretch occupies residues 41-174; the sequence is AGAYPTEKGL…KGVSKKYVPP (134 aa). Phosphoserine is present on residues Ser-121, Ser-142, and Ser-143. The interval 124–169 is disordered; sequence ENDPLRFKPHPSNMMSKLSSEDEEEDEAEDDQSEASGKKSVKGVSK. Residues 144–156 are compositionally biased toward acidic residues; sequence EDEEEDEAEDDQS. Positions 181-205 form a coiled coil; that stretch reads YDETEAEREKKRLERAKRRALSSSV. A phosphoserine mark is found at Ser-204 and Ser-214. The disordered stretch occupies residues 277–315; that stretch reads DISALTGGTVHLDEDQNPIKKRKKIPQKGRKKKGFRRRR. Basic residues predominate over residues 295-315; sequence IKKRKKIPQKGRKKKGFRRRR.

Belongs to the SAS10 family. In terms of assembly, part of the small subunit (SSU) processome, composed of more than 70 proteins and the RNA chaperone small nucleolar RNA (snoRNA) U3. Interacts with CPEB1 and EIF4E.

The protein resides in the nucleus. The protein localises to the nucleolus. It localises to the chromosome. Its subcellular location is the centromere. It is found in the cytoplasm. The protein resides in the cell projection. The protein localises to the axon. It localises to the dendrite. Its subcellular location is the filopodium. In terms of biological role, part of the small subunit (SSU) processome, first precursor of the small eukaryotic ribosomal subunit. During the assembly of the SSU processome in the nucleolus, many ribosome biogenesis factors, an RNA chaperone and ribosomal proteins associate with the nascent pre-rRNA and work in concert to generate RNA folding, modifications, rearrangements and cleavage as well as targeted degradation of pre-ribosomal RNA by the RNA exosome. Its dissociation from the complex determines the transition from state pre-A1 to state pre-A1*. Inhibits mRNA translation in a cytoplasmic polyadenylation element (CPE)-dependent manner. The protein is Neuroguidin of Homo sapiens (Human).